Consider the following 192-residue polypeptide: Cytochrome c oxidase assembly protein CtaG (192 aa).

The Cytoplasmic portion of the chain corresponds to 1 to 9 (MSLSPHQKT). A helical; Signal-anchor for type II membrane protein membrane pass occupies residues 10–30 (AGWLVGVVVVMGAASFAAVPF). Residues 31 to 192 (YDWFCRVTGF…AARPAGIDVN (162 aa)) are Periplasmic-facing.

The protein belongs to the COX11/CtaG family.

It is found in the cell inner membrane. In terms of biological role, exerts its effect at some terminal stage of cytochrome c oxidase synthesis, probably by being involved in the insertion of the copper B into subunit I. The chain is Cytochrome c oxidase assembly protein CtaG from Cereibacter sphaeroides (strain ATCC 17025 / ATH 2.4.3) (Rhodobacter sphaeroides).